Here is a 296-residue protein sequence, read N- to C-terminus: CCAAT/enhancer-binding protein beta (296 aa).

Residues 1-22 (MHRLLAWDAACLPPPPAAFRPM) form a required for Lys-133 sumoylation region. Arg-3 is subject to Asymmetric dimethylarginine; by CARM1. Positions 22 to 104 (MEVANFYYEP…YGAKPSKKPA (83 aa)) are required for MYC transcriptional repression. Lys-39 is modified (N6-acetyllysine; alternate). Lys-39 carries the N6-methylated lysine; alternate modification. Residues Lys-98 and Lys-101 each carry the N6-acetyllysine; by KAT2A and KAT2B modification. Lys-102 is subject to N6-acetyllysine; by KAT2A and KAT2B; alternate. Glycyl lysine isopeptide (Lys-Gly) (interchain with G-Cter in SUMO2); alternate cross-links involve residues Lys-102 and Lys-133. Residue Lys-133 forms a Glycyl lysine isopeptide (Lys-Gly) (interchain with G-Cter in SUMO); alternate linkage. Lys-144 participates in a covalent cross-link: Glycyl lysine isopeptide (Lys-Gly) (interchain with G-Cter in SUMO2). The tract at residues 171–199 (SGSSGSLSTSSSSSPPGTPSPADAKAAPA) is disordered. Position 179 is a phosphothreonine; by GSK3-beta (Thr-179). O-linked (GlcNAc) serine glycosylation is found at Ser-180 and Ser-181. The residue at position 184 (Ser-184) is a Phosphoserine; by GSK3-beta. Thr-188 is modified (phosphothreonine; by RPS6KA1, CDK2 and MAPK). Glycyl lysine isopeptide (Lys-Gly) (interchain with G-Cter in SUMO2) cross-links involve residues Lys-211 and Lys-213. The residue at position 217 (Thr-217) is a Phosphothreonine; by RPS6KA1 and PKC/PRKCA. The 64-residue stretch at 222–285 (SDEYKMRRER…STLRNLFKQL (64 aa)) folds into the bZIP domain. The segment at 226 to 246 (KMRRERNNIAVRKSRDKAKMR) is basic motif. Position 239 is a phosphoserine; by PKC/PRKCA (Ser-239). The tract at residues 248-255 (LETQHKVL) is leucine-zipper. Position 276 is a phosphoserine; by CaMK2 (Ser-276). Lys-283 is covalently cross-linked (Glycyl lysine isopeptide (Lys-Gly) (interchain with G-Cter in SUMO2)).

The protein belongs to the bZIP family. C/EBP subfamily. Binds DNA as a homodimer and as a heterodimer. Interacts with ATF4. Binds DNA as a heterodimer with ATF4. Interacts with MYB; within the complex, MYB and CEBPB bind to different promoter regions. Can form stable heterodimers with CEBPA, CEBPD and CEBPE. Interacts with SIX1. Isoform 2 and isoform 3 also form heterodimers. Interacts with TRIM28 and PTGES2. Interacts with PRDM16. Interacts with CCDC85B. Forms a complex with THOC5. Interacts with ZNF638; this interaction increases transcriptional activation. Interacts with CIDEA and CIDEC. Interaction with CIDEA increases transcriptional activation of a subset of CEBPB downstream target genes, including ID2, IGF1, PRLR, SOCS1, SOCS3, XDH. Interaction with CIDEC increases transcriptional activation of SOCS1, SOCS3, TGFB1, TGFBR1, ID2 and XDH. Interacts with DDIT3/CHOP. Interacts with EP300; recruits EP300 to chromatin. Interacts with RORA; the interaction disrupts interaction with EP300. Interacts (not methylated) with MED23, MED26, SMARCA2, SMARCB1 and SMARCC1. Interacts with KAT2A and KAT2B. Interacts with ATF5; EP300 is required for ATF5 and CEBPB interaction and DNA binding. Interacts with NFE2L1; the heterodimer represses expression of DSPP during odontoblast differentiation. Sumoylated by polymeric chains of SUMO2 or SUMO3. Sumoylation at Lys-133 is required for inhibition of T-cells proliferation. In adipocytes, sumoylation at Lys-133 by PIAS1 leads to ubiquitination and subsequent proteasomal degradation. Desumoylated by SENP2, which abolishes ubiquitination and stabilizes protein levels. Post-translationally, ubiquitinated, leading to proteasomal degradation. In terms of processing, phosphorylated at Thr-188 by MAPK and CDK2, serves to prime phosphorylation at Thr-179 and Ser-184 by GSK3B and acquire DNA-binding as well as transactivation activities, required to induce adipogenesis. MAPK and CDK2 act sequentially to maintain Thr-188 in the primed phosphorylated state during mitotical cloning expansion and thereby progression of terminal differentiation. Phosphorylation at Thr-217 enhances transactivation activity. Phosphorylation at Ser-276 in response to calcium increases transactivation activity. Phosphorylated at Thr-188 by RPS6KA1. O-glycosylated, glycosylation at Ser-180 and Ser-181 prevents phosphorylation on Thr-188, Ser-184 and Thr-179 and DNA binding activity which delays the adipocyte differentiation program. Post-translationally, acetylated. Acetylation at Lys-39 is an important and dynamic regulatory event that contributes to its ability to transactivate target genes, including those associated with adipogenesis and adipocyte function. Deacetylation by HDAC1 represses its transactivation activity. Acetylated by KAT2A and KAT2B within a cluster of lysine residues between amino acids 98-102, this acetylation is strongly induced by glucocorticoid treatment and enhances transactivation activity. In terms of processing, methylated. Methylation at Arg-3 by CARM1 and at Lys-39 by EHMT2, inhibits transactivation activity. Methylation is probably inhibited by phosphorylation at Thr-188. Abundantly expressed in myoblasts. Enriched in brown adipose tissue (BAT) versus white adipose tissue (WAT). Expressed in hepatocytes (at protein level). Expressed in T lymphocytes. The expression in granulosa cells of antral follicles is induced by luteinizing hormone. Expressed in chondrocytes and osteoblasts (at protein level).

It is found in the nucleus. The protein resides in the cytoplasm. Functionally, important transcription factor regulating the expression of genes involved in immune and inflammatory responses. Also plays a significant role in adipogenesis, as well as in the gluconeogenic pathway, liver regeneration, and hematopoiesis. The consensus recognition site is 5'-T[TG]NNGNAA[TG]-3'. Its functional capacity is governed by protein interactions and post-translational protein modifications. During early embryogenesis, plays essential and redundant roles with CEBPA. Has a promitotic effect on many cell types such as hepatocytes and adipocytes but has an antiproliferative effect on T-cells by repressing MYC expression, facilitating differentiation along the T-helper 2 lineage. Binds to regulatory regions of several acute-phase and cytokines genes and plays a role in the regulation of acute-phase reaction and inflammation. Also plays a role in intracellular bacteria killing. During adipogenesis, is rapidly expressed and, after activation by phosphorylation, induces CEBPA and PPARG, which turn on the series of adipocyte genes that give rise to the adipocyte phenotype. The delayed transactivation of the CEBPA and PPARG genes by CEBPB appears necessary to allow mitotic clonal expansion and thereby progression of terminal differentiation. Essential for female reproduction because of a critical role in ovarian follicle development. Restricts osteoclastogenesis. Together with NFE2L1; represses expression of DSPP during odontoblast differentiation. Essential for gene expression induction in activated macrophages. Plays a major role in immune responses such as CD4(+) T-cell response, granuloma formation and endotoxin shock. Not essential for intracellular bacteria killing. Its function is as follows. Acts as a dominant negative through heterodimerization with isoform 2. Promotes osteoblast differentiation and osteoclastogenesis. This is CCAAT/enhancer-binding protein beta from Mus musculus (Mouse).